Here is a 488-residue protein sequence, read N- to C-terminus: Multidrug resistance outer membrane protein MdtP (488 aa).

The first 23 residues, Met1–Gly23, serve as a signal peptide directing secretion. Residue Cys24 is the site of N-palmitoyl cysteine attachment. Cys24 carries S-diacylglycerol cysteine lipidation.

The protein belongs to the outer membrane factor (OMF) (TC 1.B.17) family. In terms of assembly, could be part of a tripartite efflux system composed of MdtN, MdtO and MdtP.

It localises to the cell outer membrane. Functionally, could be involved in resistance to puromycin, acriflavine and tetraphenylarsonium chloride. This chain is Multidrug resistance outer membrane protein MdtP (mdtP), found in Escherichia coli (strain K12).